Consider the following 178-residue polypeptide: GTP-dependent dephospho-CoA kinase (178 aa).

Asp-55, Val-57, Asp-74, Lys-76, and Glu-127 together coordinate GTP.

It belongs to the GTP-dependent DPCK family.

The enzyme catalyses 3'-dephospho-CoA + GTP = GDP + CoA + H(+). Its pathway is cofactor biosynthesis; coenzyme A biosynthesis. Its function is as follows. Catalyzes the GTP-dependent phosphorylation of the 3'-hydroxyl group of dephosphocoenzyme A to form coenzyme A (CoA). This chain is GTP-dependent dephospho-CoA kinase, found in Saccharolobus islandicus (strain Y.G.57.14 / Yellowstone #1) (Sulfolobus islandicus).